A 92-amino-acid polypeptide reads, in one-letter code: Small ribosomal subunit protein uS19 (92 aa).

This sequence belongs to the universal ribosomal protein uS19 family.

Functionally, protein S19 forms a complex with S13 that binds strongly to the 16S ribosomal RNA. This is Small ribosomal subunit protein uS19 from Thermobifida fusca (strain YX).